We begin with the raw amino-acid sequence, 322 residues long: Ferrochelatase (322 aa).

Fe cation-binding residues include histidine 193 and glutamate 274.

The protein belongs to the ferrochelatase family.

It is found in the cytoplasm. The catalysed reaction is heme b + 2 H(+) = protoporphyrin IX + Fe(2+). It participates in porphyrin-containing compound metabolism; protoheme biosynthesis; protoheme from protoporphyrin-IX: step 1/1. In terms of biological role, catalyzes the ferrous insertion into protoporphyrin IX. The chain is Ferrochelatase from Aliivibrio fischeri (strain MJ11) (Vibrio fischeri).